The primary structure comprises 427 residues: Cholecystokinin receptor type A (427 aa).

Topologically, residues 1–41 (MDAVASLLGNASGIPPPCELGLDNETLFCLDQPPPSKEWQP) are extracellular. N-linked (GlcNAc...) asparagine glycans are attached at residues Asn-10 and Asn-24. A disulfide bridge connects residues Cys-18 and Cys-29. Residues 42-67 (AVQILLYSLIFLLSVLGNTLVITVLI) form a helical membrane-spanning segment. Topologically, residues 68-77 (RNKRMRTVTN) are cytoplasmic. A helical transmembrane segment spans residues 78–104 (IFLLSLAISDLMLCLFCMPFNLIPNLL). Over 105–115 (KDFIFGSALCK) the chain is Extracellular. A disulfide bond links Cys-114 and Cys-196. The chain crosses the membrane as a helical span at residues 116–137 (TTTYLMGTSVSVSTLNLVAISL). The Cytoplasmic portion of the chain corresponds to 138–157 (ERYGAICKPLQSRVWQTKSH). A helical transmembrane segment spans residues 158-178 (ALKVIAATWCLSFAIMTPYPI). The Extracellular portion of the chain corresponds to 179 to 210 (YSNLVPFTKTNNQTANMCRFLLPSDVMQQAWH). Asn-190 is a glycosylation site (N-linked (GlcNAc...) asparagine). The helical transmembrane segment at 211–234 (TFLLLILFLIPGIVMMVAYGMISL) threads the bilayer. The Cytoplasmic segment spans residues 235–312 (ELYQGIKFDA…TLMAKKRVIR (78 aa)). Residues 313 to 333 (MLMVIVVLFFLCWMPIFSANA) form a helical membrane-spanning segment. Topologically, residues 334-348 (WRAYDTVSAERRLSG) are extracellular. A helical transmembrane segment spans residues 349 to 372 (TPISFILLLSYTSSCVNPIIYCFM). The Cytoplasmic portion of the chain corresponds to 373-427 (NRRFRLGFMATFPCCPNPGPPGPRAEAGEEEEGRTTRASLSRYSYSHMSASAPPS). Cys-386 carries S-palmitoyl cysteine lipidation. Residues 391–427 (GPPGPRAEAGEEEEGRTTRASLSRYSYSHMSASAPPS) form a disordered region. The span at 411–421 (SLSRYSYSHMS) shows a compositional bias: polar residues.

The protein belongs to the G-protein coupled receptor 1 family.

It localises to the cell membrane. Its function is as follows. Receptor for cholecystokinin. Mediates pancreatic growth and enzyme secretion, smooth muscle contraction of the gall bladder and stomach. Has a 1000-fold higher affinity for CCK rather than for gastrin. It modulates feeding and dopamine-induced behavior in the central and peripheral nervous system. This receptor mediates its action by association with G proteins that activate a phosphatidylinositol-calcium second messenger system. The protein is Cholecystokinin receptor type A (CCKAR) of Oryctolagus cuniculus (Rabbit).